The chain runs to 305 residues: Translation initiation factor eIF2B subunit alpha (305 aa).

Position 35 is an N6-acetyllysine (lysine 35).

Belongs to the eIF-2B alpha/beta/delta subunits family. In terms of assembly, component of the translation initiation factor 2B (eIF2B) complex which is a heterodecamer of two sets of five different subunits: alpha, beta, gamma, delta and epsilon. Subunits alpha, beta and delta comprise a regulatory subcomplex and subunits epsilon and gamma comprise a catalytic subcomplex. Within the complex, the hexameric regulatory complex resides at the center, with the two heterodimeric catalytic subcomplexes bound on opposite sides.

Its subcellular location is the cytoplasm. It is found in the cytosol. With respect to regulation, activated by the chemical integrated stress response (ISR) inhibitor ISRIB which stimulates guanine nucleotide exchange factor activity for both phosphorylated and unphosphorylated eIF2. Functionally, acts as a component of the translation initiation factor 2B (eIF2B) complex, which catalyzes the exchange of GDP for GTP on eukaryotic initiation factor 2 (eIF2) gamma subunit. Its guanine nucleotide exchange factor activity is repressed when bound to eIF2 complex phosphorylated on the alpha subunit, thereby limiting the amount of methionyl-initiator methionine tRNA available to the ribosome and consequently global translation is repressed. The polypeptide is Translation initiation factor eIF2B subunit alpha (EIF2B1) (Pongo abelii (Sumatran orangutan)).